A 548-amino-acid chain; its full sequence is Chaperonin GroEL (548 aa).

ATP-binding positions include 30–33, K51, 87–91, G415, 479–481, and D495; these read TLGP, DGTTT, and NAA. The tract at residues 525–548 is disordered; sequence PKEDKTSDASSSPAGGMGGMGGMM. Over residues 539 to 548 the composition is skewed to gly residues; the sequence is GGMGGMGGMM.

The protein belongs to the chaperonin (HSP60) family. In terms of assembly, forms a cylinder of 14 subunits composed of two heptameric rings stacked back-to-back. Interacts with the co-chaperonin GroES.

It is found in the cytoplasm. It carries out the reaction ATP + H2O + a folded polypeptide = ADP + phosphate + an unfolded polypeptide.. Functionally, together with its co-chaperonin GroES, plays an essential role in assisting protein folding. The GroEL-GroES system forms a nano-cage that allows encapsulation of the non-native substrate proteins and provides a physical environment optimized to promote and accelerate protein folding. The polypeptide is Chaperonin GroEL (Buchnera aphidicola subsp. Rhopalosiphum maidis).